Reading from the N-terminus, the 213-residue chain is Ribosomal RNA small subunit methyltransferase G (213 aa).

S-adenosyl-L-methionine-binding positions include G77, M82, 104–106 (EKS), and R145.

Belongs to the methyltransferase superfamily. RNA methyltransferase RsmG family.

Its subcellular location is the cytoplasm. The enzyme catalyses guanosine(527) in 16S rRNA + S-adenosyl-L-methionine = N(7)-methylguanosine(527) in 16S rRNA + S-adenosyl-L-homocysteine. Functionally, specifically methylates the N7 position of guanine in position 527 of 16S rRNA. This is Ribosomal RNA small subunit methyltransferase G from Pelagibacter ubique (strain HTCC1062).